A 258-amino-acid polypeptide reads, in one-letter code: Exu regulon transcriptional regulator (258 aa).

The 69-residue stretch at 7-75 (RRLYQQLAAD…KGSGIHVVSN (69 aa)) folds into the HTH gntR-type domain. Positions 35–54 (ERFIADEKNVSRTVVREAII) form a DNA-binding region, H-T-H motif.

Repressor for the exu regulon that encode genes involved in hexuronate utilization. It regulates the ExuT, UxaCA and UxuRAB operons. Binds D-tagaturonate and D-fructuronate as inducers. The sequence is that of Exu regulon transcriptional regulator (exuR) from Escherichia coli O157:H7.